The sequence spans 211 residues: N-(5'-phosphoribosyl)anthranilate isomerase (211 aa).

The protein belongs to the TrpF family.

The enzyme catalyses N-(5-phospho-beta-D-ribosyl)anthranilate = 1-(2-carboxyphenylamino)-1-deoxy-D-ribulose 5-phosphate. It participates in amino-acid biosynthesis; L-tryptophan biosynthesis; L-tryptophan from chorismate: step 3/5. The chain is N-(5'-phosphoribosyl)anthranilate isomerase from Chromohalobacter salexigens (strain ATCC BAA-138 / DSM 3043 / CIP 106854 / NCIMB 13768 / 1H11).